The following is a 206-amino-acid chain: Small ribosomal subunit protein uS4 (206 aa).

In terms of domain architecture, S4 RNA-binding spans 93 to 153 (TRLDALVLRA…PKSQTMVPFQ (61 aa)).

It belongs to the universal ribosomal protein uS4 family. As to quaternary structure, part of the 30S ribosomal subunit. Contacts protein S5. The interaction surface between S4 and S5 is involved in control of translational fidelity.

One of the primary rRNA binding proteins, it binds directly to 16S rRNA where it nucleates assembly of the body of the 30S subunit. In terms of biological role, with S5 and S12 plays an important role in translational accuracy. The polypeptide is Small ribosomal subunit protein uS4 (Bifidobacterium animalis subsp. lactis (strain AD011)).